Reading from the N-terminus, the 372-residue chain is Ciliary neurotrophic factor receptor subunit alpha (372 aa).

The first 22 residues, 1-22 (MAASVPWACCAVLAAAAAAVYT), serve as a signal peptide directing secretion. The Ig-like C2-type domain maps to 27 to 104 (PQEAPHVQYE…WHLRHQVLLH (78 aa)). A disulfide bond links C46 and C89. N60, N70, N142, N190, and N261 each carry an N-linked (GlcNAc...) asparagine glycan. 2 consecutive Fibronectin type-III domains span residues 108–205 (PPRE…VKPD) and 206–306 (PPEN…TEEP). Positions 290-294 (WSDWS) match the WSXWS motif motif. Positions 301-339 (PWTEEPRHLTTEAQAPETTTSTTSSLAPPPTTKICDPGE) are disordered. The span at 311 to 326 (TEAQAPETTTSTTSSL) shows a compositional bias: low complexity. S342 is lipidated: GPI-anchor amidated serine. Residues 343–372 (GGGPSIPFLTSVPVTLVLAAAAATANNLLI) constitute a propeptide, removed in mature form.

The protein belongs to the type I cytokine receptor family. Type 3 subfamily. In terms of assembly, forms a heterotrimer with LIFR and IL6ST. Interacts with heterodimeric neurotropic cytokine composed of CLCF1/CLC and CRLF1/CLF-1. Either alone or in complex with the heterodimer CLCF1-CRLF1 interacts with SORL1; this interaction may promote internalization and lysosomal degradation. Nervous system.

Its subcellular location is the cell membrane. Its function is as follows. Binds to CNTF. The alpha subunit provides the receptor specificity. The chain is Ciliary neurotrophic factor receptor subunit alpha (Cntfr) from Rattus norvegicus (Rat).